A 237-amino-acid polypeptide reads, in one-letter code: Class B acid phosphatase (237 aa).

The signal sequence occupies residues 1 to 23 (MRKVTLTLSAIALALSLNGAAMA). Catalysis depends on Asp-69, which acts as the Nucleophile. The Mg(2+) site is built by Asp-69 and Asp-71. The active-site Proton donor is the Asp-71. Substrate contacts are provided by residues 137–138 (TG) and Lys-177. Asp-192 is a Mg(2+) binding site.

The protein belongs to the class B bacterial acid phosphatase family. As to quaternary structure, homotetramer. It depends on Mg(2+) as a cofactor.

The protein resides in the periplasm. The enzyme catalyses a phosphate monoester + H2O = an alcohol + phosphate. Functionally, dephosphorylates several organic phosphate monoesters. Also has a phosphotransferase activity catalyzing the transfer of low-energy phosphate groups from organic phosphate monoesters to free hydroxyl groups of various organic compounds. The sequence is that of Class B acid phosphatase from Proteus mirabilis (strain HI4320).